The primary structure comprises 840 residues: Protein translocase subunit SecA (840 aa).

Residues glutamine 87, 105–109 (GEGKT), and aspartate 494 each bind ATP. The disordered stretch occupies residues 518 to 537 (RRIDNQLRGRSGRQGDPGSS). 4 residues coordinate Zn(2+): cysteine 826, cysteine 828, cysteine 837, and cysteine 838.

Belongs to the SecA family. Monomer and homodimer. Part of the essential Sec protein translocation apparatus which comprises SecA, SecYEG and auxiliary proteins SecDF-YajC and YidC. Requires Zn(2+) as cofactor.

The protein localises to the cell inner membrane. Its subcellular location is the cytoplasm. The catalysed reaction is ATP + H2O + cellular proteinSide 1 = ADP + phosphate + cellular proteinSide 2.. In terms of biological role, part of the Sec protein translocase complex. Interacts with the SecYEG preprotein conducting channel. Has a central role in coupling the hydrolysis of ATP to the transfer of proteins into and across the cell membrane, serving as an ATP-driven molecular motor driving the stepwise translocation of polypeptide chains across the membrane. This Desulforapulum autotrophicum (strain ATCC 43914 / DSM 3382 / VKM B-1955 / HRM2) (Desulfobacterium autotrophicum) protein is Protein translocase subunit SecA.